Consider the following 364-residue polypeptide: Aminomethyltransferase (364 aa).

The protein belongs to the GcvT family. In terms of assembly, the glycine cleavage system is composed of four proteins: P, T, L and H.

The enzyme catalyses N(6)-[(R)-S(8)-aminomethyldihydrolipoyl]-L-lysyl-[protein] + (6S)-5,6,7,8-tetrahydrofolate = N(6)-[(R)-dihydrolipoyl]-L-lysyl-[protein] + (6R)-5,10-methylene-5,6,7,8-tetrahydrofolate + NH4(+). Its function is as follows. The glycine cleavage system catalyzes the degradation of glycine. The sequence is that of Aminomethyltransferase from Shigella flexneri.